A 385-amino-acid polypeptide reads, in one-letter code: S-adenosylmethionine synthase (385 aa).

An ATP-binding site is contributed by His-16. Residue Asp-18 coordinates Mg(2+). Glu-44 is a binding site for K(+). The L-methionine site is built by Glu-57 and Gln-100. The flexible loop stretch occupies residues 100–110; it reads QSPDINQGVDR. ATP-binding positions include 164–166, 230–231, Asp-239, 245–246, Ala-262, and Lys-266; these read DGK, KF, and RK. Asp-239 provides a ligand contact to L-methionine. Position 270 (Lys-270) interacts with L-methionine.

Belongs to the AdoMet synthase family. Homotetramer; dimer of dimers. Mg(2+) is required as a cofactor. The cofactor is K(+).

It is found in the cytoplasm. The catalysed reaction is L-methionine + ATP + H2O = S-adenosyl-L-methionine + phosphate + diphosphate. It functions in the pathway amino-acid biosynthesis; S-adenosyl-L-methionine biosynthesis; S-adenosyl-L-methionine from L-methionine: step 1/1. Functionally, catalyzes the formation of S-adenosylmethionine (AdoMet) from methionine and ATP. The overall synthetic reaction is composed of two sequential steps, AdoMet formation and the subsequent tripolyphosphate hydrolysis which occurs prior to release of AdoMet from the enzyme. In Helicobacter pylori (strain P12), this protein is S-adenosylmethionine synthase.